An 806-amino-acid polypeptide reads, in one-letter code: Glycerol-3-phosphate acyltransferase (806 aa).

The HXXXXD motif signature appears at 305 to 310 (CHRSHM).

Belongs to the GPAT/DAPAT family.

The protein localises to the cell inner membrane. The catalysed reaction is sn-glycerol 3-phosphate + an acyl-CoA = a 1-acyl-sn-glycero-3-phosphate + CoA. It participates in phospholipid metabolism; CDP-diacylglycerol biosynthesis; CDP-diacylglycerol from sn-glycerol 3-phosphate: step 1/3. The sequence is that of Glycerol-3-phosphate acyltransferase from Enterobacter sp. (strain 638).